Here is a 589-residue protein sequence, read N- to C-terminus: UvrABC system protein C (589 aa).

One can recognise a GIY-YIG domain in the interval 10–87 (ESSGVYLMKK…IKKYSPKYNI (78 aa)). Residues 197 to 232 (SKLINELTALMNKASQDMDFEKSIIYREQIKELKSI) form the UVR domain.

This sequence belongs to the UvrC family. As to quaternary structure, interacts with UvrB in an incision complex.

The protein localises to the cytoplasm. Functionally, the UvrABC repair system catalyzes the recognition and processing of DNA lesions. UvrC both incises the 5' and 3' sides of the lesion. The N-terminal half is responsible for the 3' incision and the C-terminal half is responsible for the 5' incision. The sequence is that of UvrABC system protein C from Fusobacterium nucleatum subsp. nucleatum (strain ATCC 25586 / DSM 15643 / BCRC 10681 / CIP 101130 / JCM 8532 / KCTC 2640 / LMG 13131 / VPI 4355).